The chain runs to 388 residues: Chorismate synthase (388 aa).

NADP(+) contacts are provided by R39 and R45. Residues 130-132, 251-252, G296, 311-315, and R337 each bind FMN; these read RSS, NA, and KPIPT.

The protein belongs to the chorismate synthase family. As to quaternary structure, homotetramer. FMNH2 serves as cofactor.

It catalyses the reaction 5-O-(1-carboxyvinyl)-3-phosphoshikimate = chorismate + phosphate. It participates in metabolic intermediate biosynthesis; chorismate biosynthesis; chorismate from D-erythrose 4-phosphate and phosphoenolpyruvate: step 7/7. Its function is as follows. Catalyzes the anti-1,4-elimination of the C-3 phosphate and the C-6 proR hydrogen from 5-enolpyruvylshikimate-3-phosphate (EPSP) to yield chorismate, which is the branch point compound that serves as the starting substrate for the three terminal pathways of aromatic amino acid biosynthesis. This reaction introduces a second double bond into the aromatic ring system. In Streptococcus thermophilus (strain CNRZ 1066), this protein is Chorismate synthase.